The sequence spans 80 residues: Exodeoxyribonuclease 7 small subunit (80 aa).

The protein belongs to the XseB family. Heterooligomer composed of large and small subunits.

It is found in the cytoplasm. The catalysed reaction is Exonucleolytic cleavage in either 5'- to 3'- or 3'- to 5'-direction to yield nucleoside 5'-phosphates.. Its function is as follows. Bidirectionally degrades single-stranded DNA into large acid-insoluble oligonucleotides, which are then degraded further into small acid-soluble oligonucleotides. This Rickettsia canadensis (strain McKiel) protein is Exodeoxyribonuclease 7 small subunit.